A 427-amino-acid polypeptide reads, in one-letter code: Trigger factor (427 aa).

Residues 163 to 248 enclose the PPIase FKBP-type domain; it reads GDTVVIDFVG…IHEVKAKEVP (86 aa).

Belongs to the FKBP-type PPIase family. Tig subfamily.

Its subcellular location is the cytoplasm. The enzyme catalyses [protein]-peptidylproline (omega=180) = [protein]-peptidylproline (omega=0). Functionally, involved in protein export. Acts as a chaperone by maintaining the newly synthesized protein in an open conformation. Functions as a peptidyl-prolyl cis-trans isomerase. This Streptococcus pneumoniae (strain Hungary19A-6) protein is Trigger factor.